The following is a 697-amino-acid chain: MMRPVVVKEKRVNESQIHVVEEEVRQAKTMDRDIVTHAMKQSFAKLNPKVMIKNPIMFVVEIGFIITFILSFLPSHSSSVPGWFNITVSFILLFTVLFANFAEALAEGRGKAQADSLKHSKKDVFANVVKENGNIVQVSATDLRKGDVVIVKQGEMIPSDGEVIKGLASVDESAITGESAPVIKEAGGDFCSVTGGTMVVSDEITIIITSNPGESFIDKMISLVEGAARQKTPNEIALNTVLTSLTFIFLIVVVTLPIFTNYLGFQIDTAVLVALLVCLIPTTIGGLLSAIGIAGMDRVTKFNVLAMSGKAVEAAGDINTIILDKTGTITFGNRMAHTLLPVGNETIEQVGKWAAISSVLDETPEGRSVIEYVQAKSISYNRELAEQGEFVPFKAETRMSGVDLQDGTKVRKGAVGSVIEWVQSQGGTIPKDVNQKADFISKEGGTPLVVAVNNRIYGLIYLKDTVKPGMRERFEQLRQMGIKTVMCTGDNPLTAATIAKEAGVDEFVAECKPEDKIAVIKAEQDKGKLVAMTGDGTNDAPALAQADVGLAMNSGTTAAKEAANMIDLDSNPTKIIEVVGIGKQLLMTRGALTTFSIANDIAKYFAIIPAMFTLAIPQMEALNIMKLTSPLSAILSALLFNAVIIPLLIPLAMKGIAYKPMSSNALLGRNLLIYGLGGVIVPFIGIKVIDMIVGLFI.

4 consecutive transmembrane segments (helical) span residues 55–75 (PIMF…FLPS), 82–102 (GWFN…ANFA), 245–265 (LTFI…YLGF), and 271–291 (VLVA…LSAI). Asp324 functions as the 4-aspartylphosphate intermediate in the catalytic mechanism. ATP-binding positions include Asp361, Glu365, 393–400 (FKAETRMS), and Lys412. Residues Asp535 and Asp539 each contribute to the Mg(2+) site. A run of 3 helical transmembrane segments spans residues 605–625 (FAII…LNIM), 633–653 (AILS…PLAM), and 677–697 (GGVI…GLFI).

It belongs to the cation transport ATPase (P-type) (TC 3.A.3) family. Type IA subfamily. As to quaternary structure, the system is composed of three essential subunits: KdpA, KdpB and KdpC.

Its subcellular location is the cell membrane. The enzyme catalyses K(+)(out) + ATP + H2O = K(+)(in) + ADP + phosphate + H(+). In terms of biological role, part of the high-affinity ATP-driven potassium transport (or Kdp) system, which catalyzes the hydrolysis of ATP coupled with the electrogenic transport of potassium into the cytoplasm. This subunit is responsible for energy coupling to the transport system and for the release of the potassium ions to the cytoplasm. The sequence is that of Potassium-transporting ATPase ATP-binding subunit from Bacillus cereus (strain AH187).